The sequence spans 302 residues: Heme A synthase (302 aa).

The Cytoplasmic portion of the chain corresponds to 1-8 (MFRKQNLK). Residues 9 to 29 (WLGVLATIIMTFVQLGGALVT) form a helical membrane-spanning segment. Residues 30–67 (KTGSEDGCGSSWPLCNGALLPENLPIQTIIELSHRAVS) lie on the Extracellular side of the membrane. C37 and C44 are joined by a disulfide. E60 is an active-site residue. Residue H63 coordinates heme o. A helical transmembrane segment spans residues 68 to 88 (AISLIVVLWLVITAWKNIGYI). Residues 89–93 (KEIKP) lie on the Cytoplasmic side of the membrane. Residues 94–114 (LSIISVGFLLVQALVGAAAVI) form a helical membrane-spanning segment. The Extracellular portion of the chain corresponds to 115–125 (WQQNPYVLALH). A heme o-binding site is contributed by H125. The chain crosses the membrane as a helical span at residues 126–146 (FGISLISFSSVFLMTLIIFSI). Residues 147-161 (DKKYEADILFIHKPL) are Cytoplasmic-facing. A helical transmembrane segment spans residues 162-182 (RILTWLMAIIVYLTIYTGALV). Residues 183–215 (RHTKSSLAYGAWPIPFDDIVPHNAHDWVQFSHR) are Extracellular-facing. H214 contacts heme b. A helical membrane pass occupies residues 216-236 (GMALITFIWIMITFIHAIKNY). Residues 237 to 244 (SDNRTVRY) lie on the Cytoplasmic side of the membrane. A helical transmembrane segment spans residues 245 to 265 (GYTASFILVILQVITGALSVI). Over 266–270 (TNVNL) the chain is Extracellular. The chain crosses the membrane as a helical span at residues 271–291 (IIALFHALFITYLFGMIAYFI). Position 276 (H276) interacts with heme b. At 292–302 (LLMLRTTRSQK) the chain is on the cytoplasmic side.

Belongs to the COX15/CtaA family. Type 1 subfamily. In terms of assembly, interacts with CtaB. Requires heme b as cofactor.

The protein resides in the cell membrane. It catalyses the reaction Fe(II)-heme o + 2 A + H2O = Fe(II)-heme a + 2 AH2. Its pathway is porphyrin-containing compound metabolism; heme A biosynthesis; heme A from heme O: step 1/1. In terms of biological role, catalyzes the conversion of heme O to heme A by two successive hydroxylations of the methyl group at C8. The first hydroxylation forms heme I, the second hydroxylation results in an unstable dihydroxymethyl group, which spontaneously dehydrates, resulting in the formyl group of heme A. This Staphylococcus epidermidis (strain ATCC 35984 / DSM 28319 / BCRC 17069 / CCUG 31568 / BM 3577 / RP62A) protein is Heme A synthase.